Reading from the N-terminus, the 569-residue chain is Laccase-6 (569 aa).

Positions 1–29 (MTSSAVPSLFRLSFLLFTLQVMNIGRIGA) are cleaved as a signal peptide. Plastocyanin-like domains lie at 37 to 153 (KVQT…PKAS) and 163 to 315 (NEHT…YIGA). N-linked (GlcNAc...) asparagine glycosylation occurs at Asn83. 4 residues coordinate Cu cation: His87, His89, His132, and His134. Residues Asn208, Asn303, Asn319, Asn392, Asn438, and Asn444 are each glycosylated (N-linked (GlcNAc...) asparagine). One can recognise a Plastocyanin-like 3 domain in the interval 417-553 (DFPTTPEKAY…STMFIVKNGK (137 aa)). His472, His475, His477, His532, Cys533, His534, His538, and Met543 together coordinate Cu cation.

It belongs to the multicopper oxidase family. Cu cation is required as a cofactor. As to expression, predominantly expressed in the inflorescence stem, but not in siliques.

It localises to the secreted. The protein localises to the extracellular space. Its subcellular location is the apoplast. The enzyme catalyses 4 hydroquinone + O2 = 4 benzosemiquinone + 2 H2O. Functionally, lignin degradation and detoxification of lignin-derived products. The sequence is that of Laccase-6 (LAC6) from Arabidopsis thaliana (Mouse-ear cress).